The chain runs to 143 residues: Antiholin-like protein LrgA (143 aa).

Transmembrane regions (helical) follow at residues 6–26, 30–50, 61–81, and 97–117; these read VYSFLSQAFIFSAIMLISNII, LPIPMPSSVIGLVILFSLLCL, LGTALTGIIGFLFVPSGISVI, and VIVVATVILLAVTGLFAQFIL.

This sequence belongs to the CidA/LrgA family. LrgA subfamily.

The protein resides in the cell membrane. Its function is as follows. Inhibits the expression or activity of extracellular murein hydrolases by interacting, possibly with LrgB, with the holin-like protein CidA. The LrgAB and CidA proteins may affect the proton motive force of the membrane. May be involved in programmed cell death (PCD), possibly triggering PCD in response to antibiotics and environmental stresses. The chain is Antiholin-like protein LrgA from Bacillus cereus (strain AH187).